A 676-amino-acid polypeptide reads, in one-letter code: KVSDSAYSNSCSNSQSQRSGSSKSRLSGSHSSGSSGYGGKPSTQASSSDMIIKRNKDKSRKKKKNKGAGQGAGQAQTLISASTSLEGRDEEKPRPSGTGCVEQQICRELQDQQHGEDHSEPQATEQLQQEEEDQSGSESEADRVEGVAKSEAAQSFPIPSPLSVTIVPPSMGGCGGVGHAAGLDSGLAKFDKTWEAGPGKLESMTGVGAAAAGTGQRGERVKEDSFCCVISMHDGIVLYTTPSITDVLGYPRDMWLGRSFIDFVHLKDRATFASQITTGIPIAESRGSVPKDAKSTFCVMLRRYRGLKSGGFGVIGRPVSYEPFRLGLTFREAPEEARPDNYMVSNGTNMLLVICATPIKSSYKVPDEILSQKSPKFAIRHTATGIISHVDSAAVSALGYLPQDLIGRSIMDFYHHEDLSVMKETYETVMKKGQTAGASFCSKPYRFLIQNGCYVLLETEWTSFVNPWSRKLEFVVGHHRVFQGPKQCNVFEAAPTCKLKISEEAQSRNTRIKEDIVKRLAETVSRPSDTVKQEVSRRCQALASFMETLMDEVSRADLKEGSGGSGSSGNFTTASNIHMSSVTNTSIAGTGGTGTGTGTGTGTGTGTGTGTGTGTGTGTGTGTGTGTGTGTGTGTGTGTGTGNGTNSCTGTGTTSSSRGGSAAIPPVTLTESLLNK.

Positions K1–S34 are enriched in low complexity. The tract at residues K1–P161 is disordered. The Nuclear localization signal motif lies at K53–K66. A compositionally biased stretch (basic residues) spans K53–K66. Residues E108–E120 are compositionally biased toward basic and acidic residues. 2 PAS domains span residues D224–I359 and F377–Q483. Positions T583–K676 are disordered. Repeat copies occupy residues G589–T590, G592–T593, G594–T595, G596–T597, G598–T599, G600–T601, G602–T603, G604–T605, G606–T607, G608–T609, G610–T611, G612–T613, G614–T615, G616–T617, G618–T619, G620–T621, G622–T623, G624–T625, G626–T627, G628–T629, G630–T631, G632–T633, G634–T635, G636–T637, G638–T639, and G640–T641. Residues G589 to N643 show a composition bias toward gly residues. A 28 X 2 AA approximate tandem repeats of G-T region spans residues G589–T645. The stretch at G642–N643 is one 27; approximate repeat. Residues G644–T645 form repeat 28. Over residues G644–T654 the composition is skewed to low complexity.

Forms a heterodimer with timeless (TIM); the complex then translocates into the nucleus. In terms of processing, phosphorylated with a circadian rhythmicity, probably by the double-time protein (dbt). Phosphorylation could be implicated in the stability of per monomer and in the formation of heterodimer per-tim.

The protein resides in the nucleus. It localises to the cytoplasm. It is found in the perinuclear region. Essential for biological clock functions. Determines the period length of circadian and ultradian rhythms; an increase in PER dosage leads to shortened circadian rhythms and a decrease leads to lengthened circadian rhythms. Essential for the circadian rhythmicity of locomotor activity, eclosion behavior, and for the rhythmic component of the male courtship song that originates in the thoracic nervous system. The biological cycle depends on the rhythmic formation and nuclear localization of the TIM-PER complex. Light induces the degradation of TIM, which promotes elimination of PER. Nuclear activity of the heterodimer coordinatively regulates PER and TIM transcription through a negative feedback loop. Behaves as a negative element in circadian transcriptional loop. Does not appear to bind DNA, suggesting indirect transcriptional inhibition. This is Period circadian protein (per) from Drosophila mauritiana (Fruit fly).